Consider the following 637-residue polypeptide: Epithelial sodium channel subunit alpha (637 aa).

Residues 1–34 (MGTASRGGSVKAEKMPEGEKTRQCKQETEQQQKE) form a disordered region. Residues 1-76 (MGTASRGGSV…VCSKKNKMKT (76 aa)) lie on the Cytoplasmic side of the membrane. The span at 11–34 (KAEKMPEGEKTRQCKQETEQQQKE) shows a compositional bias: basic and acidic residues. Residues 77-97 (AFWSVLFILTFGLMYWQFGIL) traverse the membrane as a helical segment. The Extracellular portion of the chain corresponds to 98 to 548 (YREYFSYPVN…NQWSLWFGSS (451 aa)). 10 disulfide bridges follow: Cys-125–Cys-292, Cys-217–Cys-224, Cys-269–Cys-276, Cys-380–Cys-465, Cys-402–Cys-442, Cys-402–Cys-461, Cys-406–Cys-457, Cys-415–Cys-442, Cys-415–Cys-465, and Cys-417–Cys-431. The helical transmembrane segment at 549 to 569 (VLSVMELAELILDFTVITFIL) threads the bilayer. Residues 570–637 (AFRWFRSKQW…PSKDGETGLE (68 aa)) lie on the Cytoplasmic side of the membrane.

Belongs to the amiloride-sensitive sodium channel (TC 1.A.6) family. SCNN1A subfamily. In terms of assembly, heterotrimer; containing an alpha/SCNN1A, a beta/SCNN1B and a gamma/SCNN1G subunit. The long isoform has been found in cochlea, colon, and cartilage. The short isoform is only found in cochlea.

It is found in the apical cell membrane. Its subcellular location is the cell projection. It localises to the cilium. The protein resides in the cytoplasmic granule. The protein localises to the cytoplasm. It is found in the cytoplasmic vesicle. Its subcellular location is the secretory vesicle. It localises to the acrosome. The protein resides in the flagellum. The catalysed reaction is Na(+)(in) = Na(+)(out). Originally identified and characterized by its inhibition by the diuretic drug amiloride. Its function is as follows. This is one of the three pore-forming subunits of the heterotrimeric epithelial sodium channel (ENaC), a critical regulator of sodium balance and fluid homeostasis. ENaC operates in epithelial tissues, where it mediates the electrodiffusion of sodium ions from extracellular fluid through the apical membrane of cells, with water following osmotically. The chain is Epithelial sodium channel subunit alpha from Gallus gallus (Chicken).